The sequence spans 26 residues: Unknown protein 16 (26 aa).

The disordered stretch occupies residues 1 to 26; sequence AINSESGVRSVVPQPCNALPNQGPEK.

This chain is Unknown protein 16, found in Pseudotsuga menziesii (Douglas-fir).